The following is a 311-amino-acid chain: Protein MGF 360-16R (311 aa).

It belongs to the asfivirus MGF 360 family.

Functionally, plays a role in virus cell tropism, and may be required for efficient virus replication in macrophages. The chain is Protein MGF 360-16R from African swine fever virus (strain Badajoz 1971 Vero-adapted) (Ba71V).